A 360-amino-acid chain; its full sequence is Photosystem II protein D1 (360 aa).

3 helical membrane-spanning segments follow: residues 29–46, 118–133, and 142–156; these read YIGW…TATS, HFLL…EWEF, and WISV…AASA. His118 contacts chlorophyll a. A pheophytin a-binding site is contributed by Tyr126. [CaMn4O5] cluster-binding residues include Asp170 and Glu189. The chain crosses the membrane as a helical span at residues 197 to 218; it reads LHQLGVAGVFGGSLFSAMHGSL. Chlorophyll a is bound at residue His198. A quinone is bound by residues His215 and 264 to 265; that span reads SF. His215 serves as a coordination point for Fe cation. His272 contributes to the Fe cation binding site. The chain crosses the membrane as a helical span at residues 274 to 288; it reads FLGLWPVVGIWFTSM. The [CaMn4O5] cluster site is built by His332, Glu333, Asp342, and Ala344. Positions 345–360 are excised as a propeptide; that stretch reads SNESLPLALVAPAING.

This sequence belongs to the reaction center PufL/M/PsbA/D family. PSII is composed of 1 copy each of membrane proteins PsbA, PsbB, PsbC, PsbD, PsbE, PsbF, PsbH, PsbI, PsbJ, PsbK, PsbL, PsbM, PsbT, PsbX, PsbY, PsbZ, Psb30/Ycf12, at least 3 peripheral proteins of the oxygen-evolving complex and a large number of cofactors. It forms dimeric complexes. The D1/D2 heterodimer binds P680, chlorophylls that are the primary electron donor of PSII, and subsequent electron acceptors. It shares a non-heme iron and each subunit binds pheophytin, quinone, additional chlorophylls, carotenoids and lipids. D1 provides most of the ligands for the Mn4-Ca-O5 cluster of the oxygen-evolving complex (OEC). There is also a Cl(-1) ion associated with D1 and D2, which is required for oxygen evolution. The PSII complex binds additional chlorophylls, carotenoids and specific lipids. is required as a cofactor. Post-translationally, tyr-161 forms a radical intermediate that is referred to as redox-active TyrZ, YZ or Y-Z. In terms of processing, C-terminally processed by CTPA; processing is essential to allow assembly of the oxygen-evolving complex and thus photosynthetic growth.

Its subcellular location is the plastid. It is found in the chloroplast thylakoid membrane. The catalysed reaction is 2 a plastoquinone + 4 hnu + 2 H2O = 2 a plastoquinol + O2. Functionally, photosystem II (PSII) is a light-driven water:plastoquinone oxidoreductase that uses light energy to abstract electrons from H(2)O, generating O(2) and a proton gradient subsequently used for ATP formation. It consists of a core antenna complex that captures photons, and an electron transfer chain that converts photonic excitation into a charge separation. The D1/D2 (PsbA/PsbD) reaction center heterodimer binds P680, the primary electron donor of PSII as well as several subsequent electron acceptors. The chain is Photosystem II protein D1 from Antithamnion sp. (Red alga).